Consider the following 388-residue polypeptide: Nitric oxide reductase FlRd-NAD(+) reductase (388 aa).

The protein belongs to the FAD-dependent oxidoreductase family. The cofactor is FAD.

It localises to the cytoplasm. The catalysed reaction is 2 reduced [nitric oxide reductase rubredoxin domain] + NAD(+) + H(+) = 2 oxidized [nitric oxide reductase rubredoxin domain] + NADH. It participates in nitrogen metabolism; nitric oxide reduction. Its function is as follows. One of at least two accessory proteins for anaerobic nitric oxide (NO) reductase. Reduces the rubredoxin moiety of NO reductase. The sequence is that of Nitric oxide reductase FlRd-NAD(+) reductase from Aeromonas salmonicida (strain A449).